Consider the following 1129-residue polypeptide: Phytochrome A (1129 aa).

The 183-residue stretch at 217 to 399 (SMERLCDTMV…VFAIHVSKEL (183 aa)) folds into the GAF domain. Cysteine 322 lines the phytochromobilin pocket. 2 PAS domains span residues 622–692 (VTSE…LQGK) and 755–826 (DYKA…VNLG). Residues 906–1123 (YLRRQAKNPL…TFIITVELAA (218 aa)) form the Histidine kinase domain.

It belongs to the phytochrome family. In terms of assembly, homodimer. In terms of processing, contains one covalently linked phytochromobilin chromophore.

In terms of biological role, regulatory photoreceptor which exists in two forms that are reversibly interconvertible by light: the Pr form that absorbs maximally in the red region of the spectrum and the Pfr form that absorbs maximally in the far-red region. Photoconversion of Pr to Pfr induces an array of morphogenic responses, whereas reconversion of Pfr to Pr cancels the induction of those responses. Pfr controls the expression of a number of nuclear genes including those encoding the small subunit of ribulose-bisphosphate carboxylase, chlorophyll A/B binding protein, protochlorophyllide reductase, rRNA, etc. It also controls the expression of its own gene(s) in a negative feedback fashion. This is Phytochrome A (PHYA) from Petroselinum crispum (Parsley).